Consider the following 432-residue polypeptide: Enolase (432 aa).

Q167 contacts (2R)-2-phosphoglycerate. Residue E209 is the Proton donor of the active site. Mg(2+)-binding residues include D246, E291, and D318. Positions 343, 372, 373, and 394 each coordinate (2R)-2-phosphoglycerate. The Proton acceptor role is filled by K343.

Belongs to the enolase family. In terms of assembly, component of the RNA degradosome, a multiprotein complex involved in RNA processing and mRNA degradation. It depends on Mg(2+) as a cofactor.

The protein resides in the cytoplasm. Its subcellular location is the secreted. It localises to the cell surface. The catalysed reaction is (2R)-2-phosphoglycerate = phosphoenolpyruvate + H2O. The protein operates within carbohydrate degradation; glycolysis; pyruvate from D-glyceraldehyde 3-phosphate: step 4/5. Catalyzes the reversible conversion of 2-phosphoglycerate (2-PG) into phosphoenolpyruvate (PEP). It is essential for the degradation of carbohydrates via glycolysis. The polypeptide is Enolase (Buchnera aphidicola subsp. Cinara cedri (strain Cc)).